A 399-amino-acid chain; its full sequence is Phosphopentomutase (399 aa).

Residues D10, D296, H301, D337, H338, and H349 each coordinate Mn(2+).

Belongs to the phosphopentomutase family. Mn(2+) serves as cofactor.

Its subcellular location is the cytoplasm. It carries out the reaction 2-deoxy-alpha-D-ribose 1-phosphate = 2-deoxy-D-ribose 5-phosphate. It catalyses the reaction alpha-D-ribose 1-phosphate = D-ribose 5-phosphate. It functions in the pathway carbohydrate degradation; 2-deoxy-D-ribose 1-phosphate degradation; D-glyceraldehyde 3-phosphate and acetaldehyde from 2-deoxy-alpha-D-ribose 1-phosphate: step 1/2. Its function is as follows. Isomerase that catalyzes the conversion of deoxy-ribose 1-phosphate (dRib-1-P) and ribose 1-phosphate (Rib-1-P) to deoxy-ribose 5-phosphate (dRib-5-P) and ribose 5-phosphate (Rib-5-P), respectively. This chain is Phosphopentomutase, found in Idiomarina loihiensis (strain ATCC BAA-735 / DSM 15497 / L2-TR).